The sequence spans 184 residues: Homeobox protein LOX10 (184 aa).

Disordered regions lie at residues 1–29 (KIVS…PLQH) and 129–184 (YKTK…NKPG). A DNA-binding region (homeobox) is located at residues 76-135 (RRKRRILFSQAQIYELERRFRQQKYLSAPEREHLATFIGLTPTQVKIWFQNHRYKTKKSK). 2 stretches are compositionally biased toward low complexity: residues 140 to 161 (NSPS…ASTT) and 174 to 184 (SNTTNNNNKPG).

Belongs to the NK-2 homeobox family. Expressed in a segmental pattern in the endoderm and in the cephalic nervous system.

It is found in the nucleus. Its function is as follows. May play a role in patterning the gut. The polypeptide is Homeobox protein LOX10 (LOX10) (Helobdella triserialis (Leech)).